Reading from the N-terminus, the 482-residue chain is uncharacterized protein (482 aa).

12 helical membrane-spanning segments follow: residues 40–57, 83–103, 109–129, 140–160, 170–190, 205–225, 278–298, 311–331, 338–358, 366–386, 399–418, and 428–448; these read LDWY…LSFL, AAVS…VLLV, HYYL…TCFV, LLLG…ISMT, LAYL…IATG, WLYI…LFCL, VIQF…PSIL, YMSV…CLLS, GWFI…LLAT, VATY…ITWI, ALGC…GQVY, and GFAL…RFYL.

Belongs to the major facilitator superfamily. Allantoate permease family.

It localises to the endoplasmic reticulum. The protein resides in the membrane. This is an uncharacterized protein from Schizosaccharomyces pombe (strain 972 / ATCC 24843) (Fission yeast).